The following is a 77-amino-acid chain: Sec-independent protein translocase protein TatA (77 aa).

Residues 2–22 (GFGGISIWQLLIILLIVVMLF) form a helical membrane-spanning segment. Basic and acidic residues-rich tracts occupy residues 46–59 (DNGE…EEPK) and 66–77 (QARKVEEPAKKD). The interval 46–77 (DNGEAEKPAVEEPKGQTIDAQARKVEEPAKKD) is disordered.

The protein belongs to the TatA/E family. As to quaternary structure, the Tat system comprises two distinct complexes: a TatABC complex, containing multiple copies of TatA, TatB and TatC subunits, and a separate TatA complex, containing only TatA subunits. Substrates initially bind to the TatABC complex, which probably triggers association of the separate TatA complex to form the active translocon.

The protein resides in the cell inner membrane. Part of the twin-arginine translocation (Tat) system that transports large folded proteins containing a characteristic twin-arginine motif in their signal peptide across membranes. TatA could form the protein-conducting channel of the Tat system. This Ectopseudomonas mendocina (strain ymp) (Pseudomonas mendocina) protein is Sec-independent protein translocase protein TatA.